A 313-amino-acid polypeptide reads, in one-letter code: Formimidoylglutamase (313 aa).

Positions 130, 155, 157, 159, 241, and 243 each coordinate Mn(2+).

The protein belongs to the arginase family. Requires Mn(2+) as cofactor.

The enzyme catalyses N-formimidoyl-L-glutamate + H2O = formamide + L-glutamate. It participates in amino-acid degradation; L-histidine degradation into L-glutamate; L-glutamate from N-formimidoyl-L-glutamate (hydrolase route): step 1/1. Catalyzes the conversion of N-formimidoyl-L-glutamate to L-glutamate and formamide. The protein is Formimidoylglutamase of Salmonella agona (strain SL483).